Reading from the N-terminus, the 47-residue chain is RVCMGKSQHHSFPCISDRLCSNECVKEDGGWTAGYCHLRYCRCQKAC.

Intrachain disulfides connect Cys3–Cys47, Cys14–Cys36, Cys20–Cys41, and Cys24–Cys43.

Belongs to the DEFL family.

The protein is Defensin-like protein 2 of Zea mays (Maize).